The chain runs to 128 residues: MLQLVFRYQAIYLIFAGFTVFGLLLHFYSRKKKWIKINTQFADLITHNRMPSYCNLDRLMMTFEHFSIQQIAEQLNLSLPILLNELSQAQINITDSHRTLRENFPLNDEKIFAAITIALKVRFNPTLL.

The helical transmembrane segment at 8–28 (YQAIYLIFAGFTVFGLLLHFY) threads the bilayer.

It is found in the membrane. This is an uncharacterized protein from Haemophilus influenzae (strain ATCC 51907 / DSM 11121 / KW20 / Rd).